Reading from the N-terminus, the 241-residue chain is 7-cyano-7-deazaguanine synthase (241 aa).

Position 15-25 (15-25 (FSGGQDSTTTL)) interacts with ATP. Zn(2+) contacts are provided by Cys-203, Cys-218, Cys-221, and Cys-224.

The protein belongs to the QueC family. Requires Zn(2+) as cofactor.

The enzyme catalyses 7-carboxy-7-deazaguanine + NH4(+) + ATP = 7-cyano-7-deazaguanine + ADP + phosphate + H2O + H(+). Its pathway is purine metabolism; 7-cyano-7-deazaguanine biosynthesis. In terms of biological role, catalyzes the ATP-dependent conversion of 7-carboxy-7-deazaguanine (CDG) to 7-cyano-7-deazaguanine (preQ(0)). The polypeptide is 7-cyano-7-deazaguanine synthase (Azorhizobium caulinodans (strain ATCC 43989 / DSM 5975 / JCM 20966 / LMG 6465 / NBRC 14845 / NCIMB 13405 / ORS 571)).